The following is a 249-amino-acid chain: Probable transcriptional regulatory protein Strop_1792 (249 aa).

It belongs to the TACO1 family.

It is found in the cytoplasm. This chain is Probable transcriptional regulatory protein Strop_1792, found in Salinispora tropica (strain ATCC BAA-916 / DSM 44818 / JCM 13857 / NBRC 105044 / CNB-440).